Consider the following 558-residue polypeptide: Mitochondrial nucleoid-associated protein 1 (558 aa).

At 1 to 527 the chain is on the extracellular side; the sequence is MGAAEPRMEV…VQCNTTIKKS (527 aa). Disordered stretches follow at residues 29 to 88, 130 to 205, and 222 to 269; these read KMRG…SWTA, LQRV…KLGT, and LSDR…KTQK. Residues 36-45 show a composition bias toward polar residues; that stretch reads SADQNVSQSK. Residues 51-81 show a composition bias toward basic and acidic residues; sequence QKEKSPTRDLTRAKEKELEVDRPKRAVKAET. Composition is skewed to polar residues over residues 131-144 and 187-197; these read QRVTTPWSPASDAT and SSTQPHANPAT. The chain crosses the membrane as a helical span at residues 528–548; the sequence is GVGGLTMLFAGYFILCCNWSF. Residues 549–558 lie on the Cytoplasmic side of the membrane; it reads KHLKLQHWRK.

It is found in the mitochondrion inner membrane. Its subcellular location is the mitochondrion matrix. The protein resides in the mitochondrion nucleoid. Critical regulator of mitochondrial DNA (mtDNA) abundance. Binds dsDNA throughout the mitochondrial genome without sequence specificity and controls mtDNA copy number by promoting its replication. Also plays important roles in mitochondrial metabolism and cell proliferation. The protein is Mitochondrial nucleoid-associated protein 1 of Mus musculus (Mouse).